We begin with the raw amino-acid sequence, 347 residues long: MDNLQTLFDHLYQGKPLTREQMAQVFSTIIQGDMQPATMAGMLVALKMRGETIDEIAGAADALRQAAKPFPRSDASKQSGIVDIVGTGGDGHNTINISTTAAFVAAAAGAKVAKHGNRSVSSKSGSSDLLSHCGIALTMAPDAASQCLDKLGLCFLFAPHYHGGVKHAVPVRQALKTRTIFNVLGPLINPASPEFMLLGVYTLELIEPIAQVLHALGVKRAMVVYGSGLDEVALHDNTHVAELKDGVVRTYQLSPEDLGVNRADIAQLTGGEPADNALITQAILQGKGLPAHRDAVAINAGCALYISGICDSVQAGTQLALATLASGTAFTLLTDLAAASQAGEHNE.

5-phospho-alpha-D-ribose 1-diphosphate is bound by residues G86, G89 to D90, T94, N96 to T99, K114 to S122, and S126. G86 lines the anthranilate pocket. S98 provides a ligand contact to Mg(2+). N117 contacts anthranilate. R172 serves as a coordination point for anthranilate. Mg(2+) contacts are provided by D230 and E231.

The protein belongs to the anthranilate phosphoribosyltransferase family. In terms of assembly, homodimer. It depends on Mg(2+) as a cofactor.

The enzyme catalyses N-(5-phospho-beta-D-ribosyl)anthranilate + diphosphate = 5-phospho-alpha-D-ribose 1-diphosphate + anthranilate. It functions in the pathway amino-acid biosynthesis; L-tryptophan biosynthesis; L-tryptophan from chorismate: step 2/5. In terms of biological role, catalyzes the transfer of the phosphoribosyl group of 5-phosphorylribose-1-pyrophosphate (PRPP) to anthranilate to yield N-(5'-phosphoribosyl)-anthranilate (PRA). This Shewanella frigidimarina (strain NCIMB 400) protein is Anthranilate phosphoribosyltransferase.